We begin with the raw amino-acid sequence, 39 residues long: Putative beta-neurotoxin (39 aa).

The tract at residues 1–39 (GGKEGYPLNSSNGCKSGRFAGTNSNENTECKGXDAENGY) is disordered. An LCN-type CS-alpha/beta domain is found at 3-39 (KEGYPLNSSNGCKSGRFAGTNSNENTECKGXDAENGY). Residues 28–39 (TECKGXDAENGY) are compositionally biased toward basic and acidic residues.

The protein belongs to the long (4 C-C) scorpion toxin superfamily. Sodium channel inhibitor family. Beta subfamily. In terms of tissue distribution, expressed by the venom gland.

The protein localises to the secreted. Functionally, beta toxins bind voltage-independently at site-4 of sodium channels (Nav) and shift the voltage of activation toward more negative potentials thereby affecting sodium channel activation and promoting spontaneous and repetitive firing. This is Putative beta-neurotoxin from Tityus pachyurus (Colombian scorpion).